Here is a 283-residue protein sequence, read N- to C-terminus: Bifunctional protein FolD (283 aa).

NADP(+) contacts are provided by residues 165–167 (GAS), Ser-190, and Ile-231.

This sequence belongs to the tetrahydrofolate dehydrogenase/cyclohydrolase family. As to quaternary structure, homodimer.

The catalysed reaction is (6R)-5,10-methylene-5,6,7,8-tetrahydrofolate + NADP(+) = (6R)-5,10-methenyltetrahydrofolate + NADPH. It catalyses the reaction (6R)-5,10-methenyltetrahydrofolate + H2O = (6R)-10-formyltetrahydrofolate + H(+). It participates in one-carbon metabolism; tetrahydrofolate interconversion. Catalyzes the oxidation of 5,10-methylenetetrahydrofolate to 5,10-methenyltetrahydrofolate and then the hydrolysis of 5,10-methenyltetrahydrofolate to 10-formyltetrahydrofolate. The protein is Bifunctional protein FolD of Bordetella bronchiseptica (strain ATCC BAA-588 / NCTC 13252 / RB50) (Alcaligenes bronchisepticus).